The primary structure comprises 280 residues: Ribosomal RNA small subunit methyltransferase A (280 aa).

The S-adenosyl-L-methionine site is built by N28, L30, G55, E77, D103, and N122.

The protein belongs to the class I-like SAM-binding methyltransferase superfamily. rRNA adenine N(6)-methyltransferase family. RsmA subfamily.

Its subcellular location is the cytoplasm. The enzyme catalyses adenosine(1518)/adenosine(1519) in 16S rRNA + 4 S-adenosyl-L-methionine = N(6)-dimethyladenosine(1518)/N(6)-dimethyladenosine(1519) in 16S rRNA + 4 S-adenosyl-L-homocysteine + 4 H(+). In terms of biological role, specifically dimethylates two adjacent adenosines (A1518 and A1519) in the loop of a conserved hairpin near the 3'-end of 16S rRNA in the 30S particle. May play a critical role in biogenesis of 30S subunits. The sequence is that of Ribosomal RNA small subunit methyltransferase A from Roseobacter denitrificans (strain ATCC 33942 / OCh 114) (Erythrobacter sp. (strain OCh 114)).